The following is a 312-amino-acid chain: Formimidoylglutamase (312 aa).

Residues histidine 128, aspartate 153, histidine 155, aspartate 157, aspartate 240, and aspartate 242 each contribute to the Mn(2+) site.

The protein belongs to the arginase family. Mn(2+) serves as cofactor.

The enzyme catalyses N-formimidoyl-L-glutamate + H2O = formamide + L-glutamate. It functions in the pathway amino-acid degradation; L-histidine degradation into L-glutamate; L-glutamate from N-formimidoyl-L-glutamate (hydrolase route): step 1/1. In terms of biological role, catalyzes the conversion of N-formimidoyl-L-glutamate to L-glutamate and formamide. The sequence is that of Formimidoylglutamase from Enterobacter sp. (strain 638).